Reading from the N-terminus, the 27-residue chain is uncharacterized protein (27 aa).

The protein resides in the mitochondrion. This is an uncharacterized protein from Emericella nidulans (Aspergillus nidulans).